The sequence spans 140 residues: Nucleoside diphosphate kinase (140 aa).

Positions 11, 59, 87, 93, 104, and 114 each coordinate ATP. H117 serves as the catalytic Pros-phosphohistidine intermediate.

Belongs to the NDK family. As to quaternary structure, homotetramer. Mg(2+) is required as a cofactor.

It is found in the cytoplasm. It carries out the reaction a 2'-deoxyribonucleoside 5'-diphosphate + ATP = a 2'-deoxyribonucleoside 5'-triphosphate + ADP. It catalyses the reaction a ribonucleoside 5'-diphosphate + ATP = a ribonucleoside 5'-triphosphate + ADP. Functionally, major role in the synthesis of nucleoside triphosphates other than ATP. The ATP gamma phosphate is transferred to the NDP beta phosphate via a ping-pong mechanism, using a phosphorylated active-site intermediate. This Cereibacter sphaeroides (strain ATCC 17025 / ATH 2.4.3) (Rhodobacter sphaeroides) protein is Nucleoside diphosphate kinase.